The chain runs to 455 residues: tRNA modification GTPase MnmE (455 aa).

Residues arginine 22, glutamate 85, and arginine 124 each contribute to the (6S)-5-formyl-5,6,7,8-tetrahydrofolate site. Residues 220-377 (GIYTVIVGRP…VEKAIKEAIL (158 aa)) form the TrmE-type G domain. Asparagine 230 lines the K(+) pocket. Residues 230-235 (NVGKSS), 249-255 (TDIPGTT), and 274-277 (DTAG) contribute to the GTP site. A Mg(2+)-binding site is contributed by serine 234. K(+) is bound by residues threonine 249, isoleucine 251, and threonine 254. Mg(2+) is bound at residue threonine 255. Lysine 455 is a (6S)-5-formyl-5,6,7,8-tetrahydrofolate binding site.

It belongs to the TRAFAC class TrmE-Era-EngA-EngB-Septin-like GTPase superfamily. TrmE GTPase family. In terms of assembly, homodimer. Heterotetramer of two MnmE and two MnmG subunits. It depends on K(+) as a cofactor.

The protein resides in the cytoplasm. Functionally, exhibits a very high intrinsic GTPase hydrolysis rate. Involved in the addition of a carboxymethylaminomethyl (cmnm) group at the wobble position (U34) of certain tRNAs, forming tRNA-cmnm(5)s(2)U34. This chain is tRNA modification GTPase MnmE, found in Caldicellulosiruptor saccharolyticus (strain ATCC 43494 / DSM 8903 / Tp8T 6331).